Reading from the N-terminus, the 499-residue chain is Glycerol kinase (499 aa).

An ADP-binding site is contributed by T12. ATP is bound by residues T12, T13, and S14. T12 serves as a coordination point for sn-glycerol 3-phosphate. R16 contributes to the ADP binding site. Residues R82, E83, Y134, and D245 each coordinate sn-glycerol 3-phosphate. Glycerol contacts are provided by R82, E83, Y134, D245, and Q246. T267 and G311 together coordinate ADP. ATP is bound by residues T267, G311, Q315, and G412. Positions 412 and 416 each coordinate ADP.

Belongs to the FGGY kinase family.

It catalyses the reaction glycerol + ATP = sn-glycerol 3-phosphate + ADP + H(+). It functions in the pathway polyol metabolism; glycerol degradation via glycerol kinase pathway; sn-glycerol 3-phosphate from glycerol: step 1/1. Inhibited by fructose 1,6-bisphosphate (FBP). Functionally, key enzyme in the regulation of glycerol uptake and metabolism. Catalyzes the phosphorylation of glycerol to yield sn-glycerol 3-phosphate. The chain is Glycerol kinase from Brucella anthropi (strain ATCC 49188 / DSM 6882 / CCUG 24695 / JCM 21032 / LMG 3331 / NBRC 15819 / NCTC 12168 / Alc 37) (Ochrobactrum anthropi).